The sequence spans 258 residues: Imidazole glycerol phosphate synthase subunit HisF (258 aa).

Catalysis depends on residues D11 and D130.

The protein belongs to the HisA/HisF family. As to quaternary structure, heterodimer of HisH and HisF.

The protein resides in the cytoplasm. It carries out the reaction 5-[(5-phospho-1-deoxy-D-ribulos-1-ylimino)methylamino]-1-(5-phospho-beta-D-ribosyl)imidazole-4-carboxamide + L-glutamine = D-erythro-1-(imidazol-4-yl)glycerol 3-phosphate + 5-amino-1-(5-phospho-beta-D-ribosyl)imidazole-4-carboxamide + L-glutamate + H(+). It participates in amino-acid biosynthesis; L-histidine biosynthesis; L-histidine from 5-phospho-alpha-D-ribose 1-diphosphate: step 5/9. IGPS catalyzes the conversion of PRFAR and glutamine to IGP, AICAR and glutamate. The HisF subunit catalyzes the cyclization activity that produces IGP and AICAR from PRFAR using the ammonia provided by the HisH subunit. The sequence is that of Imidazole glycerol phosphate synthase subunit HisF from Methylobacterium sp. (strain 4-46).